Here is a 410-residue protein sequence, read N- to C-terminus: Caspase-1 (410 aa).

Positions 1 to 91 (MADKVLKGKR…HLAETLGLSS (91 aa)) constitute a CARD domain. Residues 1–119 (MADKVLKGKR…PLPASVNNMP (119 aa)) constitute a propeptide that is removed on maturation. Positions 88–104 (GLSSSPQSGNSQNTTDS) are enriched in polar residues. The disordered stretch occupies residues 88–125 (GLSSSPQSGNSQNTTDSEVAFPPLPASVNNMPGPAEPE). Active-site residues include His235 and Cys284. The propeptide occupies 297 to 322 (SPAAPMDSTSQMGSSLSQVGDNLEDD).

Belongs to the peptidase C14A family. As to quaternary structure, heterotetramer that consists of two anti-parallel arranged heterodimers, each one formed by a 20 kDa (Caspase-1 subunit p20) and a 10 kDa (Caspase-1 subunit p10) subunit. May be a component of the inflammasome, a protein complex which also includes PYCARD, CARD8 and NLRP2 and whose function would be the activation of pro-inflammatory caspases. Component of the AIM2 PANoptosome complex, a multiprotein complex that drives inflammatory cell death (PANoptosis). Both the p10 and p20 subunits interact with MEFV. Interacts with CARD17P/INCA and CARD18. Interacts with SERPINB1; this interaction regulates CASP1 activity. Heterotetramer that consists of two anti-parallel arranged heterodimers, each one formed by a 20 kDa (Caspase-1 subunit p20) and a 10 kDa (Caspase-1 subunit p10) subunit. In terms of processing, the two subunits are derived from the precursor sequence by an autocatalytic mechanism. Ubiquitinated via 'Lys-11'-linked polyubiquitination. Deubiquitinated by USP8.

The protein resides in the cytoplasm. The protein localises to the cell membrane. It carries out the reaction Strict requirement for an Asp residue at position P1 and has a preferred cleavage sequence of Tyr-Val-Ala-Asp-|-.. Its function is as follows. Thiol protease involved in a variety of inflammatory processes by proteolytically cleaving other proteins, such as the precursors of the inflammatory cytokines interleukin-1 beta (IL1B) and interleukin 18 (IL18) as well as the pyroptosis inducer Gasdermin-D (GSDMD), into active mature peptides. Plays a key role in cell immunity as an inflammatory response initiator: once activated through formation of an inflammasome complex, it initiates a pro-inflammatory response through the cleavage of the two inflammatory cytokines IL1B and IL18, releasing the mature cytokines which are involved in a variety of inflammatory processes. Cleaves a tetrapeptide after an Asp residue at position P1. Also initiates pyroptosis, a programmed lytic cell death pathway, through cleavage of GSDMD. In contrast to cleavage of interleukin IL1B, recognition and cleavage of GSDMD is not strictly dependent on the consensus cleavage site but depends on an exosite interface on CASP1 that recognizes and binds the Gasdermin-D, C-terminal (GSDMD-CT) part. Cleaves and activates CASP7 in response to bacterial infection, promoting plasma membrane repair. Upon inflammasome activation, during DNA virus infection but not RNA virus challenge, controls antiviral immunity through the cleavage of CGAS, rendering it inactive. In apoptotic cells, cleaves SPHK2 which is released from cells and remains enzymatically active extracellularly. This chain is Caspase-1 (CASP1), found in Felis catus (Cat).